The primary structure comprises 225 residues: Ribulose-phosphate 3-epimerase (225 aa).

Ser-9 contacts substrate. Positions 34, 36, and 68 each coordinate a divalent metal cation. Asp-36 (proton acceptor) is an active-site residue. Substrate-binding positions include His-68, 144–147, 177–179, and 199–200; these read GFGG, DGG, and GS. Asp-177 lines the a divalent metal cation pocket. The Proton donor role is filled by Asp-177.

The protein belongs to the ribulose-phosphate 3-epimerase family. The cofactor is a divalent metal cation.

It carries out the reaction D-ribulose 5-phosphate = D-xylulose 5-phosphate. It participates in carbohydrate degradation. In terms of biological role, catalyzes the reversible epimerization of D-ribulose 5-phosphate to D-xylulose 5-phosphate. The polypeptide is Ribulose-phosphate 3-epimerase (Escherichia coli O157:H7).